A 284-amino-acid chain; its full sequence is Sulfotransferase 4A1 (284 aa).

3 positions are modified to phosphothreonine: Thr-8, Thr-11, and Thr-205.

The protein belongs to the sulfotransferase 1 family. In terms of tissue distribution, expressed in brain, cerebellum and hypothalamus. Not detected in pancreas, liver, lung, intestine, kidney, uterus, adrenal gland, thymus, spleen, epididymis, testicle, and heart.

It localises to the cytoplasm. Its function is as follows. Atypical sulfotransferase family member with very low affinity for 3'-phospho-5'-adenylyl sulfate (PAPS) and very low catalytic activity towards L-triiodothyronine, thyroxine, estrone, p-nitrophenol, 2-naphthylamine, and 2-beta-naphthol. May have a role in the metabolism of drugs and neurotransmitters in the CNS. The polypeptide is Sulfotransferase 4A1 (Sult4a1) (Mus musculus (Mouse)).